Consider the following 862-residue polypeptide: MAQLSFNAALKMNALGNKAIHDPTNCRAKSERQMMWVCSRSGRTRVKMSRGSGGPGPVVMMSSSTGTSKVVSETSSTIVDDIPRLSANYHGDLWHHNVIQTLETPFRESSTYQERADELVVKIKDMFNALGDGDISPSAYDTAWVARVATVSSDGSEKPRFPQALNWVLNNQLQDGSWGIESHFSLCDRLLNTVNSVIALSVWKTGHSQVEQGAEFIAENLRLLNEEDELSPDFEIIFPALLQKAKALGINLPYDLPFIKSLSTTREARLTDVSAAADNIPANMLNALEGLEEVIDWNKIMRFQSKDGSFLSSPASTACVLMNTGDEKCFTLLNNLLDKFGGCVPCMYSIDLLERLSLVDNIEHLGIGRHFKQEIKVALDYVYRHWSERGIGWGRDSLVPDLNTTALGLRTLRTHGYDVSSDVLNNFKDENGRFFSSAGQTHVELRSVVNLFRASDLAFPDEGAMDDARKFAEPYLRDALATKISTNTKLYKEIEYVVEYPWHMSIPRLEARSYIDSYDDDYVWQRKTLYRMPSLSNSKCLELAKLDFNIVQSLHQEELKLLTRWWKESGMADINFTRHRVAEVYFSSATFEPEYSATRIAFTKIGCLQVLFDDMADIFATLDELKSFTEGVKRWDTSLLHEIPECMQTCFKVWFKLMEEVNNDVVKVQGRDMLAHIRKPWELYFNCYVQEREWLEAGYIPTFEEYLKTYAISVGLGPCTLQPILLMGELVKDDVVEKVHYPSNMFELVSLSWRLTNDTKTYQAEKARGQQASGIACYMKDNPGATEEDAIKHICRVVDRALKEASFEYFKPSNDIPMGCKSFIFNLRLCVQIFYKFIDGYGIANEEIKDYIRKVYIDPIQV.

Residues D613, D617, N757, T761, and E765 each contribute to the Mg(2+) site. A DDXXD motif motif is present at residues 613–617 (DDMAD).

Belongs to the terpene synthase family. It depends on Mg(2+) as a cofactor.

The enzyme catalyses (2E,6E,10E)-geranylgeranyl diphosphate = taxa-4(5),11(12)-diene + diphosphate. It functions in the pathway alkaloid biosynthesis; taxol biosynthesis; taxa-4(20),11-dien-5alpha-ol from geranylgeranyl diphosphate: step 1/2. Functionally, catalyzes the cyclization of the ubiquitous isoprenoid intermediate geranylgeranyl diphosphate to taxa-4,11-diene, the parent olefin with a taxane skeleton. The sequence is that of Taxadiene synthase (TDC1) from Taxus baccata (English yew).